Consider the following 622-residue polypeptide: Probable ATP-dependent RNA helicase DDX41 (622 aa).

Residues 1–15 show a composition bias toward basic and acidic residues; the sequence is MEDSEPERKRARADE. 2 disordered regions span residues 1–39 and 51–84; these read MEDS…YVPL and LQRR…PQSN. Residue Ser-4 is modified to Phosphoserine. Lys-9 carries the N6-acetyllysine modification. A Glycyl lysine isopeptide (Lys-Gly) (interchain with G-Cter in ubiquitin) cross-link involves residue Lys-9. A phosphoserine mark is found at Ser-21 and Ser-23. A compositionally biased stretch (acidic residues) spans 24–33; sequence EDEDEDDEDY. At Tyr-33 the chain carries Phosphotyrosine. Lys-115 is covalently cross-linked (Glycyl lysine isopeptide (Lys-Gly) (interchain with G-Cter in ubiquitin)). Positions 181 to 209 match the Q motif motif; sequence KSFKEMKFPAAILRGLKKKGILHPTPIQI. Residues 212–396 form the Helicase ATP-binding domain; it reads IPTILSGRDM…KSALVKPVTI (185 aa). ATP is bound at residue 225-232; the sequence is AFTGSGKT. The short motif at 344–347 is the DEAD box element; that stretch reads DEAD. Residues 407-567 enclose the Helicase C-terminal domain; it reads DVIQEVEYVK…KVPPVLQVLH (161 aa). A Phosphotyrosine modification is found at Tyr-414. Glycyl lysine isopeptide (Lys-Gly) (interchain with G-Cter in SUMO2) cross-links involve residues Lys-416 and Lys-442. A CCHC-type zinc finger spans residues 580–597; the sequence is RGCAFCGGLGHRITDCPK.

Belongs to the DEAD box helicase family. DDX41 subfamily. In terms of assembly, identified in the spliceosome C complex. Interacts with ERCC6. Interacts with FAM50A. Interacts with STING1. Interacts with CGAS. Interacts with several spliceosomes components such as PRP19 or CDC5L. Acetylation at Lys-9 regulates the nuclear/cytoplasmic localization. Post-translationally, phosphorylated by BTK; phosphorylation induces binding to dsDNA and STING1. In terms of processing, 'Lys-48'-linked ubiquitinated and degraded by TRIM21 leading to negative regulation of the innate immune response to intracellular dsDNA.

It is found in the nucleus. The protein localises to the cytoplasm. The enzyme catalyses ATP + H2O = ADP + phosphate + H(+). Functionally, multifunctional protein that participates in many aspects of cellular RNA metabolism. Plays pivotal roles in innate immune sensing and hematopoietic homeostasis. Recognizes foreign or self-nucleic acids generated during microbial infection, thereby initiating anti-pathogen responses. Mechanistically, phosphorylation by BTK allows binding to dsDNA leading to interaction with STING1. Modulates the homeostasis of dsDNA through its ATP-dependent DNA-unwinding activity and ATP-independent strand-annealing activity. In turn, induces STING1-mediated type I interferon and cytokine responses to DNA and DNA viruses. During murine leukemia virus infection, primarily senses the DNA/RNA hybrid generated at the first step of reverse transcription, while cGAS recognizes dsDNA generated at the next step and both are needed for the antiretroviral innate immune response. Selectively modulates the transcription of certain immunity-associated genes by regulating their alternative splicing. Binds to RNA (R)-loops, structures consisting of DNA/RNA hybrids and a displaced strand of DNA that occur during transcription, and prevents their accumulation, thereby maintaining genome stability. Also participates in pre-mRNA splicing, translational regulation and snoRNA processing, which is essential for ribosome biogenesis. This is Probable ATP-dependent RNA helicase DDX41 (Ddx41) from Mus musculus (Mouse).